Here is a 234-residue protein sequence, read N- to C-terminus: uncharacterized protein (234 aa).

The next 4 membrane-spanning stretches (helical) occupy residues 22–42 (TFLN…IPLI), 59–79 (INWA…AYLI), 154–174 (FWIF…IFFC), and 186–206 (LLSL…IFAL).

It localises to the cell membrane. This is an uncharacterized protein from Escherichia coli (strain K12).